Consider the following 342-residue polypeptide: Cell division protein ZipA (342 aa).

The Periplasmic portion of the chain corresponds to 1 to 6; sequence MEDLQL. Residues 7 to 27 form a helical membrane-spanning segment; the sequence is VLFILGAIAIVAVLVHGFWSI. Residues 28-342 lie on the Cytoplasmic side of the membrane; that stretch reads RRQQPKSLKD…DYLHRIRANA (315 aa). The tract at residues 33–57 is disordered; that stretch reads KSLKDSPMGNFYKQQADKESPPKRV. The segment covering 47 to 57 has biased composition (basic and acidic residues); that stretch reads QADKESPPKRV.

It belongs to the ZipA family. In terms of assembly, interacts with FtsZ via their C-terminal domains.

It localises to the cell inner membrane. Its function is as follows. Essential cell division protein that stabilizes the FtsZ protofilaments by cross-linking them and that serves as a cytoplasmic membrane anchor for the Z ring. Also required for the recruitment to the septal ring of downstream cell division proteins. The sequence is that of Cell division protein ZipA from Shewanella sp. (strain W3-18-1).